Consider the following 238-residue polypeptide: MTDTYNSISNFIENELTALLSSDDYLMDDLAGELPNEVCRLLKAQVIEKRKDAMSRGKQDLLSKEIYDNESELRASQSQQIMELVGDIPKYSLGSELRNRVEGEPQSTSIERLIEDVLKLPQMEVADEEEVEVENDLKVLSEYSNLRKDLILKCQALQIGESKLSDILSQTNSINSLTTSIKEASEDDDISEYFATYNGKLVVALEEMKLLLEEAVKTFGNSPEKREKIKKILSELKK.

Phosphoserine is present on serine 222.

It belongs to the NKP1 family. In terms of assembly, component of the inner kinetochore constitutive centromere-associated network (CCAN) (also known as central kinetochore CTF19 complex in yeast), which is composed of at least AME1, CHL4, CNN1, CTF3, CTF19, IML3, MCM16, MCM21, MCM22, MHF1, MHF2, MIF2, NKP1, NKP2, OKP1 and WIP1. NKP1 interacts directly with OKP1 and AME1.

It localises to the nucleus. Its subcellular location is the chromosome. It is found in the centromere. The protein resides in the kinetochore. In terms of biological role, component of the kinetochore, a multiprotein complex that assembles on centromeric DNA and attaches chromosomes to spindle microtubules, mediating chromosome segregation and sister chromatid segregation during meiosis and mitosis. Component of the inner kinetochore constitutive centromere-associated network (CCAN), which serves as a structural platform for outer kinetochore assembly. The polypeptide is Inner kinetochore subunit NKP1 (NKP1) (Saccharomyces cerevisiae (strain ATCC 204508 / S288c) (Baker's yeast)).